Consider the following 233-residue polypeptide: Ubiquinone biosynthesis O-methyltransferase (233 aa).

S-adenosyl-L-methionine-binding residues include R37, G56, D77, and M121.

This sequence belongs to the methyltransferase superfamily. UbiG/COQ3 family.

It catalyses the reaction a 3-demethylubiquinol + S-adenosyl-L-methionine = a ubiquinol + S-adenosyl-L-homocysteine + H(+). The enzyme catalyses a 3-(all-trans-polyprenyl)benzene-1,2-diol + S-adenosyl-L-methionine = a 2-methoxy-6-(all-trans-polyprenyl)phenol + S-adenosyl-L-homocysteine + H(+). It functions in the pathway cofactor biosynthesis; ubiquinone biosynthesis. In terms of biological role, O-methyltransferase that catalyzes the 2 O-methylation steps in the ubiquinone biosynthetic pathway. This Azoarcus sp. (strain BH72) protein is Ubiquinone biosynthesis O-methyltransferase.